Consider the following 835-residue polypeptide: Leucine--tRNA ligase (835 aa).

Residues 36–46 (PYPSGKIHVGH) carry the 'HIGH' region motif. The 'KMSKS' region motif lies at 602–606 (KMSKS). Residue lysine 605 participates in ATP binding.

It belongs to the class-I aminoacyl-tRNA synthetase family.

It localises to the cytoplasm. It catalyses the reaction tRNA(Leu) + L-leucine + ATP = L-leucyl-tRNA(Leu) + AMP + diphosphate. The chain is Leucine--tRNA ligase from Rickettsia conorii (strain ATCC VR-613 / Malish 7).